An 82-amino-acid chain; its full sequence is Protein transport protein SBH1 (82 aa).

Positions 1–36 (MSSPTPPGGQRTLQKRKQGSSQKVAASAPKKNTNSN) are disordered. Topologically, residues 1-53 (MSSPTPPGGQRTLQKRKQGSSQKVAASAPKKNTNSNNSILKIYSDEATGLRVD) are cytoplasmic. The span at 19–36 (GSSQKVAASAPKKNTNSN) shows a compositional bias: polar residues. The helical transmembrane segment at 54-74 (PLVVLFLAVGFIFSVVALHVI) threads the bilayer.

The protein belongs to the SEC61-beta family. Component of the heterotrimeric Sec61 complex, which is composed of SSH1, SBH1 and SSS1. Presumably three to four Sec61 heterotrimers assemble into an oligomeric ring with a central aqueous pore. In cotranslational ER import, the pore diameter varies from 9-15 A in a ribosome-free resting state to 40-60 A in a functional state when associated with the ribosome. The Sec61 complex is part of a channel-forming translocon complex whose composition seem to change dependent upon different functional states. During post-translational ER import the Sec61 complex associates with the Sec62/63 complex to form the Sec complex. SBH1 interacts OST2, OST4 and WBP1 components of the OT complex.

The protein resides in the endoplasmic reticulum membrane. Part of the Sec61 complex, which is the major component of a channel-forming translocon complex that mediates protein translocation across the endoplasmic reticulum (ER). The functional states of the translocon complex include co- and post-translational ER import, cotranslational membrane protein integration and retrograde transport of misfolded proteins out of the ER. In the cotranslational pathway, ribosomes synthesizing presecretory proteins are targeted to the translocon by the cytosolic signal recognition particle (SRP) and its ER-localized receptor. The association of the Sec61 complex with the ribosome is mediated by the 28S rRNA of the large ribosomal subunit. SRP-independent post-translational translocation requires the association of additional factors, such as the Sec62/63 complex and KAR2. This chain is Protein transport protein SBH1 (SBH1), found in Saccharomyces cerevisiae (strain ATCC 204508 / S288c) (Baker's yeast).